Reading from the N-terminus, the 334-residue chain is Hydroxyproline O-arabinosyltransferase NOD3 (334 aa).

The helical; Signal-anchor transmembrane segment at 1 to 18 threads the bilayer; sequence LLMVLGFFFATYNLVSMI.

The protein belongs to the RDN family.

The protein localises to the golgi apparatus membrane. The enzyme catalyses trans-4-hydroxy-L-prolyl-[protein] + UDP-beta-L-arabinofuranose = O-(beta-L-arabinofuranosyl)-trans-4-hydroxy-L-prolyl-[protein] + UDP + H(+). Its function is as follows. Probable glycosyltransferase involved in the O-arabinosylation of several proteins including extensins and small signaling peptides. Catalyzes the transfer of the initial L-arabinose to the hydroxyl group of Hyp residues. Probably involved in the arabinosylation of CLAVATA3/ESR-related (CLE) signaling peptides that move from root to shoot, to interact with receptor kinase signaling that regulates nodulation. Involved in long distance nodulation signaling events. Involved in the autoregulation of nodulation (AON), a long distance systemic signaling from root to shoot and back again, which allows legumes to limit the number of root nodules formed based on available nitrogen and previous rhizobial colonization. This Pisum sativum (Garden pea) protein is Hydroxyproline O-arabinosyltransferase NOD3.